Consider the following 130-residue polypeptide: Transcription antitermination protein NusB (130 aa).

Belongs to the NusB family.

Functionally, involved in transcription antitermination. Required for transcription of ribosomal RNA (rRNA) genes. Binds specifically to the boxA antiterminator sequence of the ribosomal RNA (rrn) operons. This Bacillus anthracis (strain A0248) protein is Transcription antitermination protein NusB.